Consider the following 126-residue polypeptide: C2H2-type zinc-finger transcription factor M5 (126 aa).

Disordered stretches follow at residues alanine 17–arginine 52 and glutamate 103–aspartate 126. Residues serine 38–aspartate 48 are compositionally biased toward polar residues. The C2H2-type 1; degenerate zinc finger occupies asparagine 51–asparagine 76. A C2H2-type 2; degenerate zinc finger spans residues phenylalanine 83–asparagine 115. The span at asparagine 115 to aspartate 126 shows a compositional bias: basic and acidic residues.

Belongs to the GLI C2H2-type zinc-finger protein family.

The protein resides in the nucleus. Functionally, transcription factor that probably regulates the expression of the gene cluster that mediates the biosynthesis of squalestatin S1 (SQS1, also known as zaragozic acid A), a heavily oxidized fungal polyketide that offers potent cholesterol lowering activity by targeting squalene synthase (SS). The chain is C2H2-type zinc-finger transcription factor M5 from Phoma sp. (strain ATCC 20986 / MF5453).